A 78-amino-acid polypeptide reads, in one-letter code: Large ribosomal subunit protein bL28 (78 aa).

Residues 1–21 are disordered; sequence MSRVCQVTGKKPMVGNNRSHA.

Belongs to the bacterial ribosomal protein bL28 family.

The protein is Large ribosomal subunit protein bL28 of Shewanella baltica (strain OS223).